The following is a 130-amino-acid chain: Small ribosomal subunit protein uS8 (130 aa).

Belongs to the universal ribosomal protein uS8 family. Part of the 30S ribosomal subunit. Contacts proteins S5 and S12.

In terms of biological role, one of the primary rRNA binding proteins, it binds directly to 16S rRNA central domain where it helps coordinate assembly of the platform of the 30S subunit. This chain is Small ribosomal subunit protein uS8, found in Hahella chejuensis (strain KCTC 2396).